The sequence spans 466 residues: 3-isopropylmalate dehydratase large subunit (466 aa).

3 residues coordinate [4Fe-4S] cluster: Cys345, Cys405, and Cys408.

This sequence belongs to the aconitase/IPM isomerase family. LeuC type 1 subfamily. Heterodimer of LeuC and LeuD. Requires [4Fe-4S] cluster as cofactor.

The catalysed reaction is (2R,3S)-3-isopropylmalate = (2S)-2-isopropylmalate. Its pathway is amino-acid biosynthesis; L-leucine biosynthesis; L-leucine from 3-methyl-2-oxobutanoate: step 2/4. Catalyzes the isomerization between 2-isopropylmalate and 3-isopropylmalate, via the formation of 2-isopropylmaleate. In Microcystis aeruginosa (strain NIES-843 / IAM M-2473), this protein is 3-isopropylmalate dehydratase large subunit.